The chain runs to 686 residues: Delta-like protein 4 (686 aa).

The first 27 residues, 1–27 (MTPGSRSACRWALLLLAVLWPQQRAAG), serve as a signal peptide directing secretion. Residues 28-530 (SGIFQLRLQE…PVGLPPSFPW (503 aa)) are Extracellular-facing. 2 disulfides stabilise this stretch: Cys51–Cys55 and Cys62–Cys75. Asn79, Asn109, and Asn162 each carry an N-linked (GlcNAc...) asparagine glycan. The DSL domain maps to 174–218 (VVCSDNYYGDSCSRLCKKRDDHFGHYECQPDGSLSCLPGWTGKYC). Cys176 and Cys185 form a disulfide bridge. Interaction with Notch1 stretches follow at residues 186-188 (SRL) and 192-196 (RDDHF). Cystine bridges form between Cys189–Cys201, Cys209–Cys218, Cys223–Cys234, Cys227–Cys240, Cys242–Cys251, Cys254–Cys265, Cys260–Cys271, Cys273–Cys282, Cys289–Cys301, Cys295–Cys311, Cys313–Cys322, Cys329–Cys340, Cys334–Cys349, Cys351–Cys360, Cys367–Cys378, Cys372–Cys389, Cys391–Cys400, Cys407–Cys418, Cys412–Cys427, Cys429–Cys438, Cys445–Cys456, Cys450–Cys465, Cys467–Cys476, Cys485–Cys496, Cys490–Cys507, and Cys509–Cys518. 8 EGF-like domains span residues 219–252 (DQPI…PLCN), 256–283 (PHNG…LFCD), 285–323 (DLNY…EHCE), 325–361 (ELSK…QHCE), 363–401 (STLT…SNCE), 403–439 (KVDR…THCE), 441–477 (HISD…RRCE), and 481–519 (TNDA…SRCE). The helical transmembrane segment at 531-551 (VAVSLGVGLVVLLVLLVMVAV) threads the bilayer. The Cytoplasmic portion of the chain corresponds to 552-686 (AVRQLRLRRP…RNECVIATEV (135 aa)).

In terms of assembly, interacts with NOTCH4. Interacts (via N-terminal DSL and MNNL domains) with NOTCH1 (via EGF-like domains).

The protein resides in the cell membrane. Its function is as follows. Involved in the Notch signaling pathway as Notch ligand. Activates NOTCH1 and NOTCH4. Involved in angiogenesis; negatively regulates endothelial cell proliferation and migration and angiogenic sprouting. Essential for retinal progenitor proliferation. Required for suppressing rod fates in late retinal progenitors as well as for proper generation of other retinal cell types. During spinal cord neurogenesis, inhibits V2a interneuron fate. The chain is Delta-like protein 4 from Rattus norvegicus (Rat).